A 25-amino-acid polypeptide reads, in one-letter code: Cysteine-rich venom protein 25 (25 aa).

The disordered stretch occupies residues 1–25; that stretch reads NVDFNSESTRRKKKQKEIVDLXNSL.

This sequence belongs to the CRISP family. Contains 8 disulfide bonds. In terms of tissue distribution, expressed by the venom gland.

Its subcellular location is the secreted. This chain is Cysteine-rich venom protein 25, found in Naja haje haje (Egyptian cobra).